Here is a 125-residue protein sequence, read N- to C-terminus: Large ribosomal subunit protein bL12 (125 aa).

This sequence belongs to the bacterial ribosomal protein bL12 family. Homodimer. Part of the ribosomal stalk of the 50S ribosomal subunit. Forms a multimeric L10(L12)X complex, where L10 forms an elongated spine to which 2 to 4 L12 dimers bind in a sequential fashion. Binds GTP-bound translation factors.

In terms of biological role, forms part of the ribosomal stalk which helps the ribosome interact with GTP-bound translation factors. Is thus essential for accurate translation. In Thermoanaerobacter sp. (strain X514), this protein is Large ribosomal subunit protein bL12.